Consider the following 300-residue polypeptide: Cutinase est2 (300 aa).

Positions 1–39 (MSVTTPRRETSLLSRALRATAAAATAVVATVALAAPAQA) are cleaved as a signal peptide. Tyrosine 99 provides a ligand contact to poly(ethylene terephthalate). The Nucleophile role is filled by serine 169. The poly(ethylene terephthalate) site is built by methionine 170 and tryptophan 194. Position 213 (glutamate 213) interacts with Ca(2+). Aspartate 215 acts as the Charge relay system in catalysis. Aspartate 243 is a Ca(2+) binding site. The active-site Charge relay system is histidine 247. A disulfide bridge links cysteine 280 with cysteine 298. Glutamate 292 contributes to the Ca(2+) binding site.

This sequence belongs to the AB hydrolase superfamily. Monomer. Requires Ca(2+) as cofactor.

The protein localises to the secreted. The protein resides in the periplasm. It carries out the reaction an acetyl ester + H2O = an aliphatic alcohol + acetate + H(+). The catalysed reaction is (ethylene terephthalate)(n) + H2O = (ethylene terephthalate)(n-1) + 4-[(2-hydroxyethoxy)carbonyl]benzoate + H(+). The enzyme catalyses a butanoate ester + H2O = an aliphatic alcohol + butanoate + H(+). It catalyses the reaction cutin + H2O = cutin monomers.. It carries out the reaction a hexanoate ester + H2O = an aliphatic alcohol + hexanoate + H(+). The catalysed reaction is an octanoate ester + H2O = an aliphatic alcohol + octanoate + H(+). With respect to regulation, activated by calcium ions. Activated by magnesium ions. Activated by manganese ions. Inhibited by the serine hydrolase inhibitor phenylmethanesulfonyl fluoride (PMSF). Inhibited by the chelator ethylenediaminetetraacetic acid (EDTA). Inhibited by iron ions. Inhibited by aluminum ions. Inhibited by rubidium ions. Inhibited by lithium ions. Catalyzes the hydrolysis of cutin, a polyester that forms the structure of plant cuticle. Shows esterase activity towards p-nitrophenol-linked aliphatic esters (pNP-aliphatic esters). Capable of degrading the plastic poly(ethylene terephthalate) (PET), the most abundant polyester plastic in the world. Can also depolymerize the synthetic polyesters poly(epsilon-caprolactone) (PCL), poly(butylene succinate-co-adipate) (PBSA), poly(butylene succinate) (PBS), and poly(lactic acid) (PLA). This chain is Cutinase est2, found in Thermobifida alba (Thermomonospora alba).